The sequence spans 196 residues: Segregation and condensation protein B (196 aa).

It belongs to the ScpB family. As to quaternary structure, homodimer. Homodimerization may be required to stabilize the binding of ScpA to the Smc head domains. Component of a cohesin-like complex composed of ScpA, ScpB and the Smc homodimer, in which ScpA and ScpB bind to the head domain of Smc. The presence of the three proteins is required for the association of the complex with DNA.

It localises to the cytoplasm. Participates in chromosomal partition during cell division. May act via the formation of a condensin-like complex containing Smc and ScpA that pull DNA away from mid-cell into both cell halves. This is Segregation and condensation protein B from Pediococcus pentosaceus (strain ATCC 25745 / CCUG 21536 / LMG 10740 / 183-1w).